The chain runs to 121 residues: Prefoldin subunit beta (121 aa).

This sequence belongs to the prefoldin subunit beta family. As to quaternary structure, heterohexamer of two alpha and four beta subunits.

It localises to the cytoplasm. In terms of biological role, molecular chaperone capable of stabilizing a range of proteins. Seems to fulfill an ATP-independent, HSP70-like function in archaeal de novo protein folding. In Methanothermobacter thermautotrophicus (strain ATCC 29096 / DSM 1053 / JCM 10044 / NBRC 100330 / Delta H) (Methanobacterium thermoautotrophicum), this protein is Prefoldin subunit beta (pfdB).